The chain runs to 677 residues: Methionine--tRNA ligase (677 aa).

A 'HIGH' region motif is present at residues 15–25; sequence PYANGPIHIGH. Zn(2+)-binding residues include cysteine 146, cysteine 149, cysteine 159, and cysteine 162. A 'KMSKS' region motif is present at residues 332 to 336; the sequence is KMSKS. ATP is bound at residue lysine 335. Residues 576–677 form the tRNA-binding domain; it reads DFAKVDLRVA…DGAKPGMRIM (102 aa).

The protein belongs to the class-I aminoacyl-tRNA synthetase family. MetG type 1 subfamily. Homodimer. It depends on Zn(2+) as a cofactor.

The protein localises to the cytoplasm. The enzyme catalyses tRNA(Met) + L-methionine + ATP = L-methionyl-tRNA(Met) + AMP + diphosphate. Functionally, is required not only for elongation of protein synthesis but also for the initiation of all mRNA translation through initiator tRNA(fMet) aminoacylation. The protein is Methionine--tRNA ligase of Idiomarina loihiensis (strain ATCC BAA-735 / DSM 15497 / L2-TR).